The chain runs to 163 residues: IQ domain-containing protein F2 (163 aa).

IQ domains lie at 42–71 (RVIA…STWI) and 98–127 (RERA…AIYV).

The polypeptide is IQ domain-containing protein F2 (IQCF2) (Bos taurus (Bovine)).